The primary structure comprises 223 residues: 2-phospho-L-lactate guanylyltransferase (223 aa).

It belongs to the CofC family. As to quaternary structure, homodimer.

The enzyme catalyses (2S)-2-phospholactate + GTP + H(+) = (2S)-lactyl-2-diphospho-5'-guanosine + diphosphate. It functions in the pathway cofactor biosynthesis; coenzyme F420 biosynthesis. In terms of biological role, guanylyltransferase that catalyzes the activation of (2S)-2-phospholactate (2-PL) as (2S)-lactyl-2-diphospho-5'-guanosine, via the condensation of 2-PL with GTP. It is involved in the biosynthesis of coenzyme F420, a hydride carrier cofactor. The chain is 2-phospho-L-lactate guanylyltransferase from Methanothermobacter thermautotrophicus (strain ATCC 29096 / DSM 1053 / JCM 10044 / NBRC 100330 / Delta H) (Methanobacterium thermoautotrophicum).